An 890-amino-acid chain; its full sequence is Alanine--tRNA ligase (890 aa).

4 residues coordinate Zn(2+): His-572, His-576, Cys-674, and His-678.

This sequence belongs to the class-II aminoacyl-tRNA synthetase family. Zn(2+) serves as cofactor.

It is found in the cytoplasm. It catalyses the reaction tRNA(Ala) + L-alanine + ATP = L-alanyl-tRNA(Ala) + AMP + diphosphate. Catalyzes the attachment of alanine to tRNA(Ala) in a two-step reaction: alanine is first activated by ATP to form Ala-AMP and then transferred to the acceptor end of tRNA(Ala). Also edits incorrectly charged Ser-tRNA(Ala) and Gly-tRNA(Ala) via its editing domain. In Saccharopolyspora erythraea (strain ATCC 11635 / DSM 40517 / JCM 4748 / NBRC 13426 / NCIMB 8594 / NRRL 2338), this protein is Alanine--tRNA ligase.